A 377-amino-acid polypeptide reads, in one-letter code: Cyclin-I (377 aa).

A disordered region spans residues 357 to 377 (DLSRQEGHASPCPPLQPVSVM). The span at 367-377 (PCPPLQPVSVM) shows a compositional bias: pro residues.

This sequence belongs to the cyclin family. In terms of tissue distribution, highest levels in adult heart, brain and skeletal muscle. Lower levels in adult placenta, lung, kidney and pancreas. Also high levels in fetal brain and lower levels in fetal lung, liver and kidney. Also abundant in testis and thyroid.

It is found in the nucleus membrane. The polypeptide is Cyclin-I (Homo sapiens (Human)).